The following is a 254-amino-acid chain: Countin-2 (254 aa).

An N-terminal signal peptide occupies residues 1–19; that stretch reads MMIKYITIAILFIASLVKA. The Saposin B-type domain maps to 22-107; it reads QFSLCPTCVD…EELTVCPKNQ (86 aa). Cystine bridges form between Cys26-Cys103, Cys29-Cys97, and Cys56-Cys68. N-linked (GlcNAc...) asparagine glycosylation is found at Asn110 and Asn219. Residues 231-254 form a disordered region; sequence QMTGTGSGSGSGSGSSSGAAYLRY. A compositionally biased stretch (gly residues) spans 233–245; sequence TGTGSGSGSGSGS.

This sequence belongs to the countin family.

It localises to the secreted. Cell-counting factor that limits the minimum size of the multicellular structure. May up-regulate the expression of both gp24 and gp80, which mediate cell adhesion. This Dictyostelium discoideum (Social amoeba) protein is Countin-2 (ctnB).